Consider the following 79-residue polypeptide: Conotoxin ArMSGL-0124 (79 aa).

The N-terminal stretch at 1 to 20 (MSRLGIMVLTLLLLVYMATS) is a signal peptide. A propeptide spanning residues 21–44 (HQDAGEKQATQRDAINFRWKRSLT) is cleaved from the precursor. 3 cysteine pairs are disulfide-bonded: cysteine 52–cysteine 64, cysteine 56–cysteine 73, and cysteine 63–cysteine 77. At leucine 78 the chain carries Leucine amide.

Belongs to the conotoxin O3 superfamily. Expressed by the venom duct.

The protein localises to the secreted. The polypeptide is Conotoxin ArMSGL-0124 (Conus arenatus (Sand-dusted cone)).